A 428-amino-acid chain; its full sequence is Ribulose bisphosphate carboxylase (428 aa).

Lys-151 (proton acceptor) is an active-site residue. Lys-153 serves as a coordination point for substrate. Residues Lys-177, Asp-179, and Glu-180 each contribute to the Mg(2+) site. An N6-carboxylysine modification is found at Lys-177. His-270 (proton acceptor) is an active-site residue. Substrate is bound by residues Arg-271, His-303, 354–356, and 376–379; these read SGG and QFGG.

It belongs to the RuBisCO large chain family. Type III subfamily. Homodimer or homodecamer. In contrast to form I RuBisCO, the form III RuBisCO is composed solely of large subunits. Mg(2+) serves as cofactor.

The catalysed reaction is 2 (2R)-3-phosphoglycerate + 2 H(+) = D-ribulose 1,5-bisphosphate + CO2 + H2O. The enzyme catalyses D-ribulose 1,5-bisphosphate + O2 = 2-phosphoglycolate + (2R)-3-phosphoglycerate + 2 H(+). Functionally, catalyzes the addition of molecular CO(2) and H(2)O to ribulose 1,5-bisphosphate (RuBP), generating two molecules of 3-phosphoglycerate (3-PGA). Functions in an archaeal AMP degradation pathway, together with AMP phosphorylase and R15P isomerase. This chain is Ribulose bisphosphate carboxylase, found in Methanosarcina barkeri (strain Fusaro / DSM 804).